Consider the following 470-residue polypeptide: Zinc finger protein weckle (470 aa).

The segment at 1-103 (MGVPTSDWIY…DALRLEYGLP (103 aa)) is required for homodimerization. A ZAD domain is found at 10 to 82 (YWCRLCARDD…SKVQAIFELL (73 aa)). Residues C12, C15, C55, and C58 each contribute to the Zn(2+) site. Residues 156–265 (NSDPKVLASP…LSMSPHGSQS (110 aa)) form a disordered region. S168 is modified (phosphoserine). Acidic residues predominate over residues 195-208 (ESDDEEAILDEDEA). The segment covering 214 to 225 (LKRKRGRPKGSG) has biased composition (basic residues). The span at 237-254 (TSREPDDNAKSKQDDKTS) shows a compositional bias: basic and acidic residues. Residues 255–265 (ELSMSPHGSQS) are compositionally biased toward polar residues. 6 consecutive C2H2-type zinc fingers follow at residues 271 to 294 (YPCKICNETFMSFMALRRHKHDMH), 300 to 322 (YVCDHCGKGLKTFTSLVEHQLVH), 328 to 350 (CICPVCNAGFKNKARLRVHSQTH), 355 to 377 (FECNVCGKKLQTRAILNKHKYVH), 383 to 405 (FKCEVCGSGCKNSTALKIHLLGH), and 411 to 434 (YVCKYCGKAFASNTNCRSHKWKKH).

As to quaternary structure, homodimer. Interacts with Myd88 and Toll.

It is found in the cell membrane. Its function is as follows. Acts as an adapter to assemble/stabilize a Toll/wek/Myd88/tube complex; required for efficient recruitment of Myd88 to Toll. Dispensable for innate immune response; plays a minimal role, if any, in the immune defense against Gram-positive bacteria and fungi. Involved in dorsoventral axis determination. The polypeptide is Zinc finger protein weckle (Drosophila melanogaster (Fruit fly)).